A 228-amino-acid polypeptide reads, in one-letter code: L-ribulose-5-phosphate 4-epimerase UlaF (228 aa).

Substrate-binding positions include 26–27 (GN), 43–44 (SG), and 72–73 (SS). Zn(2+) contacts are provided by D74, H93, and H95. Residue D118 is the Proton donor/acceptor of the active site. H167 is a Zn(2+) binding site. The Proton donor/acceptor role is filled by Y225.

It belongs to the aldolase class II family. AraD/FucA subfamily. The cofactor is Zn(2+).

The enzyme catalyses L-ribulose 5-phosphate = D-xylulose 5-phosphate. The protein operates within cofactor degradation; L-ascorbate degradation; D-xylulose 5-phosphate from L-ascorbate: step 4/4. Its function is as follows. Catalyzes the isomerization of L-ribulose 5-phosphate to D-xylulose 5-phosphate. Is involved in the anaerobic L-ascorbate utilization. This Escherichia coli O81 (strain ED1a) protein is L-ribulose-5-phosphate 4-epimerase UlaF.